We begin with the raw amino-acid sequence, 254 residues long: Adenosine 5'-phosphosulfate reductase (254 aa).

[4Fe-4S] cluster contacts are provided by Cys140, Cys141, Cys223, and Cys226. The active-site Nucleophile; cysteine thiosulfonate intermediate is the Cys249.

Belongs to the PAPS reductase family. CysH subfamily. It depends on [4Fe-4S] cluster as a cofactor.

The protein resides in the cytoplasm. The catalysed reaction is [thioredoxin]-disulfide + sulfite + AMP + 2 H(+) = adenosine 5'-phosphosulfate + [thioredoxin]-dithiol. It participates in sulfur metabolism; hydrogen sulfide biosynthesis; sulfite from sulfate. In terms of biological role, catalyzes the formation of sulfite from adenosine 5'-phosphosulfate (APS) using thioredoxin as an electron donor. The polypeptide is Adenosine 5'-phosphosulfate reductase (Mycobacterium bovis (strain ATCC BAA-935 / AF2122/97)).